A 158-amino-acid polypeptide reads, in one-letter code: Protein EOLA1 (158 aa).

The ASCH domain maps to 6-92 (LSFRQPYAGF…IAGLVDIGET (87 aa)).

The protein belongs to the EOLA family. In terms of assembly, interacts with MT2A. Expressed primarily in heart, skeletal muscle, kidney, liver and placenta. Relatively high level of expression in spleen, colon and small intestine. Almost no expression in brain, thymus, lung and peripheral blood leukocytes. Expressed in epithelial cells (at protein level).

May play a role in cell protection during the inflammatory response. In epithelial cells, negatively regulates IL6 production and apoptosis through the regulation of MT2A expression. The protein is Protein EOLA1 of Homo sapiens (Human).